A 369-amino-acid polypeptide reads, in one-letter code: Omega-amidase, chloroplastic (369 aa).

A chloroplast-targeting transit peptide spans 1–63 (MKSAISSSLF…SALRSISSSM (63 aa)). The residue at position 64 (A64) is an N-acetylalanine. Positions 88–337 (FNIGLCQLSV…EAIIIAEIDY (250 aa)) constitute a CN hydrolase domain. E127 (proton acceptor) is an active-site residue. The active-site Proton donor is the K201. The active-site Nucleophile is the C242.

Belongs to the nitrilase superfamily. NIT1/NIT2 family.

It is found in the plastid. Its subcellular location is the chloroplast. It carries out the reaction a monoamide of a dicarboxylate + H2O = a dicarboxylate + NH4(+). Its function is as follows. Omega-amidase involved in the metabolism of asparagine. Probably also closely coupled with glutamine transamination in the methionine salvage cycle. Can use alpha-ketosuccinamate and alpha-hydroxysuccinamate as substrates, producing respectively oxaloacetate and malate, or alpha-ketoglutaramate, producing alpha-ketoglutarate. The protein is Omega-amidase, chloroplastic of Arabidopsis thaliana (Mouse-ear cress).